Consider the following 146-residue polypeptide: Keratin-associated protein 4-1 (146 aa).

A run of 18 repeats spans residues 5–9 (CCGSV), 24–28 (CCRPS), 29–33 (CCQTT), 34–38 (CCCPS), 44–48 (CCRPS), 54–58 (CCQTT), 59–63 (CCRPS), 64–68 (CCHPV), 69–73 (CCQTT), 83–87 (CCRPL), 88–92 (CCQTT), 102–106 (CCRPL), 107–111 (CCQTT), 121–125 (CCRPL), 126–130 (CCQTT), 131–135 (CCRAT), 136–140 (CCRPS), and 141–145 (CCGSS). The segment at 5 to 145 (CCGSVCSDQG…CCRPSCCGSS (141 aa)) is 18 X 5 AA repeats of C-C-[GRQC]-[SPT]-[VSTL].

It belongs to the KRTAP type 4 family. In terms of assembly, interacts with hair keratins. Expressed in the hair follicles.

In the hair cortex, hair keratin intermediate filaments are embedded in an interfilamentous matrix, consisting of hair keratin-associated proteins (KRTAP), which are essential for the formation of a rigid and resistant hair shaft through their extensive disulfide bond cross-linking with abundant cysteine residues of hair keratins. The matrix proteins include the high-sulfur and high-glycine-tyrosine keratins. The protein is Keratin-associated protein 4-1 (KRTAP4-1) of Homo sapiens (Human).